The sequence spans 753 residues: Rho guanine nucleotide exchange factor gef1 (753 aa).

3 disordered regions span residues 52–150 (SNSY…DRNR), 175–194 (TLRK…RVSG), and 200–245 (AQNS…ASLL). 4 stretches are compositionally biased toward polar residues: residues 94-105 (DPQTPNTPPVSS), 114-141 (GSFN…TLTP), 181-191 (TNTSSNGTSRR), and 200-220 (AQNS…GSST). A compositionally biased stretch (low complexity) spans 230 to 245 (TLASMPSSHSSTASLL). Residues 311-507 (KRANLIKELV…QELISGINQK (197 aa)) enclose the DH domain.

As to quaternary structure, interacts with cdc42.

It localises to the cytoplasm. In terms of biological role, has a role in the control of cell polarity and cytokinesis. Involved in bipolar growth, via modulation of cdc42-shk1-orb6 signaling, and septum formation. Stimulates guanine nucleotide exchange of cdc42. The sequence is that of Rho guanine nucleotide exchange factor gef1 (gef1) from Schizosaccharomyces pombe (strain 972 / ATCC 24843) (Fission yeast).